A 1960-amino-acid chain; its full sequence is [F-actin]-monooxygenase MICAL3 (1960 aa).

Residues 2–494 (EESKNEATNR…RHLYDTGDTK (493 aa)) are monooxygenase domain. Residues Cys97, 116-118 (EKR), 123-125 (RNN), Phe183, Tyr298, and Asp398 each bind FAD. In terms of domain architecture, Calponin-homology (CH) spans 518–624 (VARSSKLLGW…YLTQFYEMFK (107 aa)). Ser649 carries the post-translational modification Phosphoserine. A disordered region spans residues 658-704 (GQTISRKRSPKDKKEKDLDGAGKRRKTSQSEEEDTPRGHRGARPTLV). Positions 669–679 (DKKEKDLDGAG) are enriched in basic and acidic residues. 2 positions are modified to phosphoserine: Ser685 and Ser687. One can recognise an LIM zinc-binding domain in the interval 762-824 (DTCYFCQKRV…KPHYCYRLSG (63 aa)). The Zn(2+) site is built by Cys764, Cys767, His785, Cys788, Cys791, Cys794, Cys814, and His817. Disordered stretches follow at residues 826 to 887 (AQRK…LRGT) and 906 to 1295 (LEEV…EALK). A Phosphothreonine modification is found at Thr887. The residue at position 971 (Ser971) is a Phosphoserine. A compositionally biased stretch (acidic residues) spans 984 to 1014 (GEEEEEDEEDEEEEEEEEDEEDEEEDEDESS). Basic and acidic residues-rich tracts occupy residues 1039–1051 (HWTHIRESQEERA) and 1072–1084 (DVDSEPAEIKGEA). Phosphoserine occurs at positions 1129, 1139, 1156, and 1188. Composition is skewed to pro residues over residues 1192–1203 (SPLPEPSTPPAE) and 1217–1233 (RTPPSPASPQRPSPPTQ). A Phosphoserine modification is found at Ser1250. At Thr1252 the chain carries Phosphothreonine. Residues Ser1254, Ser1286, and Ser1313 each carry the phosphoserine modification. Over residues 1277–1286 (QGVTKDTLGS) the composition is skewed to polar residues. 2 disordered regions span residues 1316 to 1550 (LTPV…KRGL) and 1564 to 1782 (RMRA…EEEL). Position 1317 is a phosphothreonine (Thr1317). The span at 1379 to 1393 (PDREPKGPREEHRDL) shows a compositional bias: basic and acidic residues. Residues 1394–1406 (SSSSGLGLQGSSS) show a composition bias toward low complexity. Ser1404 carries the phosphoserine modification. The span at 1407 to 1425 (RTRTPGSQSFNTSDSTMLT) shows a compositional bias: polar residues. Thr1425 carries the post-translational modification Phosphothreonine. The span at 1485 to 1503 (SVDEIPFADDVEDTYDDNT) shows a compositional bias: acidic residues. Residues 1594–1611 (AAAAPRTPRTPAPRRATA) show a composition bias toward low complexity. Residues 1616-1627 (GPEEPAPRHEAT) are compositionally biased toward basic and acidic residues. The span at 1633–1653 (SPPSDSGGPDGSVTSSEGSSG) shows a compositional bias: low complexity. A compositionally biased stretch (basic residues) spans 1654–1672 (KSKKRSSLFSPRRSKKEKK). 2 positions are modified to phosphoserine: Ser1660 and Ser1663. Residues 1718-1727 (CPSTPSSGTT) are compositionally biased toward polar residues. The segment covering 1762–1778 (VLERTSQKSRKEPRTYT) has biased composition (basic and acidic residues). Residues 1779–1952 (EEELNAKLTR…DKDLEAAMLS (174 aa)) are a coiled coil. Positions 1799-1948 (KQEELKRLHR…EKEEDKDLEA (150 aa)) constitute a bMERB domain. At Ser1870 the chain carries Phosphoserine.

This sequence belongs to the Mical family. Interacts with RAB1B, RAB8A, RAB10, RAB13 and RAB15 (in their GTP-bound forms); binding to RAB1B is of low affinity compared to other Rab proteins; at least in case of RAB8A can bind 2 molecules of RAB8A simultaneously through a high and a low affinity binding site, respectively. Interacts with ERC1 and RAB8A; may bridge ERC1 with RAB8A. Interacts with KIF23 and ERC1; enhances the interaction between KIF23 and ERC1. Interacts with NINL. FAD serves as cofactor.

Its subcellular location is the cytoplasm. The protein localises to the cell cortex. It is found in the cytoskeleton. The protein resides in the nucleus. It localises to the midbody. Its subcellular location is the spindle. The protein localises to the cilium basal body. The catalysed reaction is L-methionyl-[F-actin] + NADPH + O2 + H(+) = L-methionyl-(R)-S-oxide-[F-actin] + NADP(+) + H2O. Its function is as follows. Monooxygenase that promotes depolymerization of F-actin by mediating oxidation of specific methionine residues on actin to form methionine-sulfoxide, resulting in actin filament disassembly and preventing repolymerization. In the absence of actin, it also functions as a NADPH oxidase producing H(2)O(2). Seems to act as Rab effector protein and play a role in vesicle trafficking. Involved in exocytic vesicles tethering and fusion: the monooxygenase activity is required for this process and implicates RAB8A associated with exocytotic vesicles. Required for cytokinesis. Contributes to stabilization and/or maturation of the intercellular bridge independently of its monooxygenase activity. Promotes recruitment of Rab8 and ERC1 to the intercellular bridge, and together these proteins are proposed to function in timely abscission. This chain is [F-actin]-monooxygenase MICAL3 (MICAL3), found in Bos taurus (Bovine).